A 252-amino-acid chain; its full sequence is Aquaporin TIP1-2 (252 aa).

Residues 1-23 lie on the Cytoplasmic side of the membrane; it reads MPIGSIAIGAPGEASHPDTIKAS. A helical membrane pass occupies residues 24-44; the sequence is LAEFISTLIFVFAGEGSGMAF. Residues 45-55 are Vacuolar-facing; that stretch reads NKLTNDGSTTP. The chain crosses the membrane as a helical span at residues 56 to 76; that stretch reads AGLVAASLAHGFALFVAVSVG. Topologically, residues 77-103 are cytoplasmic; the sequence is ANISGGHVNPAVTFGAFLGGNISLIRG. The short motif at 85 to 87 is the NPA 1 element; sequence NPA. A helical membrane pass occupies residues 104–124; that stretch reads ILYWIAQLLGSVVACLLLKLA. Over 125-143 the chain is Vacuolar; that stretch reads TGGLETSAFSLSSDVSVWN. Residues 144–164 traverse the membrane as a helical segment; it reads AVVFEIVMTFGLVYTVYATAV. Residues 165–172 lie on the Cytoplasmic side of the membrane; sequence DPRKGDLG. The helical transmembrane segment at 173 to 193 threads the bilayer; the sequence is VIAPIAIGFIVGANILAGGAF. Residues 194-219 are Vacuolar-facing; it reads DGASMNPAVSFGPAVVSWTWDNHWVY. Residues 199–201 carry the NPA 2 motif; that stretch reads NPA. A helical membrane pass occupies residues 220–240; that stretch reads WVGPLIGAAIAALVYDGVFIG. At 241 to 252 the chain is on the cytoplasmic side; it reads QATHEQLPPSDY.

It belongs to the MIP/aquaporin (TC 1.A.8) family. TIP (TC 1.A.8.10) subfamily. As to expression, mainly expressed in fruits and leaves, and, to a lower extent, in roots, stems and flowers.

The protein localises to the vacuole membrane. In terms of biological role, water channel required to facilitate the transport of water from the vacuolar compartment to the cytoplasm. This chain is Aquaporin TIP1-2, found in Musa acuminata (Banana).